We begin with the raw amino-acid sequence, 589 residues long: Deoxynucleoside triphosphate triphosphohydrolase SAMHD1 (589 aa).

Met-1 carries the N-acetylmethionine modification. Polar residues predominate over residues 1-10 (MQSADSQNTP). The interval 1–41 (MQSADSQNTPKRPRRDGSPRTPPDSPLADAETSPSHDLDPD) is disordered. Phosphoserine is present on Ser-18. A Phosphothreonine modification is found at Thr-21. 2 positions are modified to phosphoserine: Ser-33 and Ser-88. Residues 45-100 (WGPEQVWSFLRRCGFSDSELLKRCREKRMSGSLLPFPEDLGISSHGKKMKLLNCIQ) enclose the SAM domain. GTP is bound by residues Lys-104 and Val-105. Asn-107 serves as a coordination point for dGTP. Residues Asp-125, Gln-130, and Arg-133 each coordinate GTP. The dGTP site is built by Gln-137, Leu-138, Val-144, and Arg-152. A dATP-binding site is contributed by Gln-137. Gln-137 lines the dCTP pocket. Residue Gln-137 coordinates dTTP. Arg-152 contacts dATP. Arg-152 is a binding site for dCTP. Residue Arg-152 participates in dTTP binding. In terms of domain architecture, HD spans 152–277 (RFEHSLGVGY…IKDASKWLYK (126 aa)). His-155, His-194, and Asp-195 together coordinate Mn(2+). Positions 198 and 203 each coordinate dATP. DCTP contacts are provided by His-198 and His-203. 2 residues coordinate dTTP: His-198 and His-203. The active site involves His-221. Asp-300 lines the Mn(2+) pocket. DGTP-binding residues include Lys-301, Tyr-304, Asp-308, Arg-322, Arg-341, Lys-343, Asn-347, Arg-355, Tyr-363, Gln-364, His-365, and Lys-366. Residues Lys-301, Tyr-304, and Asp-308 each contribute to the dATP site. DCTP-binding residues include Lys-301, Tyr-304, and Asp-308. DTTP contacts are provided by Lys-301, Tyr-304, and Asp-308. Arg-355 contacts dATP. Arg-355 lines the dCTP pocket. Gln-364 is a binding site for dATP. A dCTP-binding site is contributed by Gln-364. Gln-364 serves as a coordination point for dTTP. Residues Arg-440 and Lys-444 each coordinate GTP. Residue Lys-457 forms a Glycyl lysine isopeptide (Lys-Gly) (interchain with G-Cter in SUMO2) linkage. Lys-512 contacts GTP. DGTP is bound at residue Lys-512.

It belongs to the SAMHD1 family. In terms of assembly, homodimer; in absence of GTP and dNTP. Homotetramer; in GTP- and dNTP-bound form. Interacts with MRE11; leading to stimulate the exonuclease activity of MRE11. Interacts with RBBP8/CtIP. Interacts (via its C-terminus) with CD81. The cofactor is Zn(2+).

The protein resides in the nucleus. The protein localises to the chromosome. The enzyme catalyses a 2'-deoxyribonucleoside 5'-triphosphate + H2O = a 2'-deoxyribonucleoside + triphosphate + H(+). It catalyses the reaction dATP + H2O = 2'-deoxyadenosine + triphosphate + H(+). The catalysed reaction is dCTP + H2O = 2'-deoxycytidine + triphosphate + H(+). It carries out the reaction dGTP + H2O = 2'-deoxyguanosine + triphosphate + H(+). The enzyme catalyses dTTP + H2O = thymidine + triphosphate + H(+). With respect to regulation, allosterically activated and regulated via the combined actions of GTP and dNTPs (dATP, dGTP, dTTP and dCTP): Allosteric site 1 binds GTP, while allosteric site 2 binds dNTP. Allosteric activation promotes the formation of highly active homotetramers. Its function is as follows. Protein that acts both as a host restriction factor involved in defense response to virus and as a regulator of DNA end resection at stalled replication forks. Has deoxynucleoside triphosphate (dNTPase) activity, which is required to restrict infection by viruses: dNTPase activity reduces cellular dNTP levels to levels too low for retroviral reverse transcription to occur, blocking early-stage virus replication in dendritic and other myeloid cells. Likewise, suppresses LINE-1 retrotransposon activity. In addition to virus restriction, dNTPase activity acts as a regulator of DNA precursor pools by regulating dNTP pools. Functions during S phase at stalled DNA replication forks to promote the resection of gapped or reversed forks: acts by stimulating the exonuclease activity of MRE11, activating the ATR-CHK1 pathway and allowing the forks to restart replication. Its ability to promote degradation of nascent DNA at stalled replication forks is required to prevent induction of type I interferons, thereby preventing chronic inflammation. Ability to promote DNA end resection at stalled replication forks is independent of dNTPase activity. Enhances immunoglobulin hypermutation in B-lymphocytes by promoting transversion mutation. The sequence is that of Deoxynucleoside triphosphate triphosphohydrolase SAMHD1 from Bos taurus (Bovine).